The sequence spans 193 residues: Acyl carrier protein phosphodiesterase (193 aa).

The protein belongs to the AcpH family.

It catalyses the reaction holo-[ACP] + H2O = apo-[ACP] + (R)-4'-phosphopantetheine + H(+). In terms of biological role, converts holo-ACP to apo-ACP by hydrolytic cleavage of the phosphopantetheine prosthetic group from ACP. This chain is Acyl carrier protein phosphodiesterase, found in Escherichia coli O139:H28 (strain E24377A / ETEC).